The primary structure comprises 394 residues: Dimethyladenosine transferase 2, mitochondrial (394 aa).

The N-terminal 19 residues, 1-19 (MWVPGAGIPSRLTLSAFTR), are a transit peptide targeting the mitochondrion. S-adenosyl-L-methionine-binding residues include valine 75, glutamate 123, and aspartate 149. The DNA-binding stretch occupies residues 326–327 (KR).

It belongs to the class I-like SAM-binding methyltransferase superfamily. rRNA adenine N(6)-methyltransferase family. KsgA subfamily. In terms of assembly, homodimer. Component of the mitochondrial transcription initiation complex, composed at least of TFB2M, TFAM and POLRMT. In this complex TFAM recruits POLRMT to the promoter whereas TFB2M induces structural changes in POLRMT to enable promoter opening and trapping of the DNA non-template strand. Interacts with mitochondrial RNA polymerase POLRMT. Interacts with TFAM.

Its subcellular location is the mitochondrion. It carries out the reaction adenosine in rRNA + S-adenosyl-L-methionine = N(6)-methyladenosine in rRNA + S-adenosyl-L-homocysteine + H(+). In terms of biological role, S-adenosyl-L-methionine-dependent rRNA methyltransferase which may methylate two specific adjacent adenosines in the loop of a conserved hairpin near the 3'-end of 12S mitochondrial rRNA. Component of the mitochondrial transcription initiation complex, composed at least of TFB2M, TFAM and POLRMT that is required for basal transcription of mitochondrial DNA. In this complex TFAM recruits POLRMT to a specific promoter whereas TFB2M induces structural changes in POLRMT to enable promoter opening and trapping of the DNA non-template strand. Stimulates transcription independently of the methyltransferase activity. This Bos taurus (Bovine) protein is Dimethyladenosine transferase 2, mitochondrial.